A 236-amino-acid polypeptide reads, in one-letter code: LexA repressor (236 aa).

Positions 26 to 46 (FDEMKEALDLASKSGIHRLIT) form a DNA-binding region, H-T-H motif. The interval 84–107 (SPSVIEGGQGRSSPAPRPAANNDD) is disordered. Active-site for autocatalytic cleavage activity residues include serine 157 and lysine 195.

This sequence belongs to the peptidase S24 family. As to quaternary structure, homodimer.

The enzyme catalyses Hydrolysis of Ala-|-Gly bond in repressor LexA.. Represses a number of genes involved in the response to DNA damage (SOS response), including recA and lexA. In the presence of single-stranded DNA, RecA interacts with LexA causing an autocatalytic cleavage which disrupts the DNA-binding part of LexA, leading to derepression of the SOS regulon and eventually DNA repair. This is LexA repressor from Chelativorans sp. (strain BNC1).